Reading from the N-terminus, the 711-residue chain is Ribosomal RNA large subunit methyltransferase K/L (711 aa).

Residues 43–154 (TLYRTLLWSR…RENLVISLDL (112 aa)) enclose the THUMP domain.

It belongs to the methyltransferase superfamily. RlmKL family.

The protein localises to the cytoplasm. The enzyme catalyses guanosine(2445) in 23S rRNA + S-adenosyl-L-methionine = N(2)-methylguanosine(2445) in 23S rRNA + S-adenosyl-L-homocysteine + H(+). It catalyses the reaction guanosine(2069) in 23S rRNA + S-adenosyl-L-methionine = N(2)-methylguanosine(2069) in 23S rRNA + S-adenosyl-L-homocysteine + H(+). Its function is as follows. Specifically methylates the guanine in position 2445 (m2G2445) and the guanine in position 2069 (m7G2069) of 23S rRNA. The chain is Ribosomal RNA large subunit methyltransferase K/L from Haemophilus influenzae (strain PittEE).